Consider the following 325-residue polypeptide: tRNA(Ile)-lysidine synthase (325 aa).

34 to 39 (SGGADS) lines the ATP pocket.

Belongs to the tRNA(Ile)-lysidine synthase family.

Its subcellular location is the cytoplasm. It carries out the reaction cytidine(34) in tRNA(Ile2) + L-lysine + ATP = lysidine(34) in tRNA(Ile2) + AMP + diphosphate + H(+). Functionally, ligates lysine onto the cytidine present at position 34 of the AUA codon-specific tRNA(Ile) that contains the anticodon CAU, in an ATP-dependent manner. Cytidine is converted to lysidine, thus changing the amino acid specificity of the tRNA from methionine to isoleucine. The chain is tRNA(Ile)-lysidine synthase from Rhodococcus erythropolis (strain PR4 / NBRC 100887).